The chain runs to 196 residues: Carnitine operon protein CaiE (196 aa).

The disordered stretch occupies residues 173-196 (TQPLRQMEENRPRLQGTTDVTPKR). Positions 187 to 196 (QGTTDVTPKR) are enriched in polar residues.

Belongs to the transferase hexapeptide repeat family.

The protein operates within amine and polyamine metabolism; carnitine metabolism. In terms of biological role, overproduction of CaiE stimulates the activity of CaiB and CaiD. The polypeptide is Carnitine operon protein CaiE (Escherichia coli O139:H28 (strain E24377A / ETEC)).